We begin with the raw amino-acid sequence, 61 residues long: Large ribosomal subunit protein uL30 (61 aa).

The protein belongs to the universal ribosomal protein uL30 family. As to quaternary structure, part of the 50S ribosomal subunit.

The protein is Large ribosomal subunit protein uL30 of Francisella philomiragia subsp. philomiragia (strain ATCC 25017 / CCUG 19701 / FSC 153 / O#319-036).